Reading from the N-terminus, the 282-residue chain is Energy-coupling factor transporter ATP-binding protein EcfA1 (282 aa).

Residues 9–243 (IEIDNLSFKY…NDELLNIGLD (235 aa)) form the ABC transporter domain. An ATP-binding site is contributed by 43–50 (GHNGSGKS).

Belongs to the ABC transporter superfamily. Energy-coupling factor EcfA family. In terms of assembly, forms a stable energy-coupling factor (ECF) transporter complex composed of 2 membrane-embedded substrate-binding proteins (S component), 2 ATP-binding proteins (A component) and 2 transmembrane proteins (T component).

It is found in the cell membrane. ATP-binding (A) component of a common energy-coupling factor (ECF) ABC-transporter complex. Unlike classic ABC transporters this ECF transporter provides the energy necessary to transport a number of different substrates. The chain is Energy-coupling factor transporter ATP-binding protein EcfA1 from Ligilactobacillus salivarius (strain UCC118) (Lactobacillus salivarius).